The primary structure comprises 234 residues: Covalently-linked cell wall protein 14 (234 aa).

The first 22 residues, M1–A22, serve as a signal peptide directing secretion. Residues A23–S109 form the CFEM domain. 4 cysteine pairs are disulfide-bonded: C27–C66, C31–C61, C41–C49, and C51–C82. D46 serves as a coordination point for heme. Low complexity predominate over residues S86–T207. Positions S86–G208 are disordered. A lipid anchor (GPI-anchor amidated glycine) is attached at G215. The propeptide at S216–L234 is removed in mature form.

This sequence belongs to the CCW14 family. In terms of processing, the GPI-anchor is attached to the protein in the endoplasmic reticulum and serves to target the protein to the cell surface. There, the glucosamine-inositol phospholipid moiety is cleaved off and the GPI-modified mannoprotein is covalently attached via its lipidless GPI glycan remnant to the 1,6-beta-glucan of the outer cell wall layer.

It is found in the secreted. The protein localises to the cell wall. The protein resides in the membrane. In terms of biological role, beta-glucan associated cell wall protein involved in cell wall structure. May serve as cross-linking or coat-forming wall protein. This Candida albicans (strain SC5314 / ATCC MYA-2876) (Yeast) protein is Covalently-linked cell wall protein 14 (SSR1).